Reading from the N-terminus, the 278-residue chain is Large ribosomal subunit protein uL2 (278 aa).

Residues 218 to 278 (RPHNRGVVMN…IMRSRHQRKK (61 aa)) form a disordered region.

Belongs to the universal ribosomal protein uL2 family. As to quaternary structure, part of the 50S ribosomal subunit. Forms a bridge to the 30S subunit in the 70S ribosome.

In terms of biological role, one of the primary rRNA binding proteins. Required for association of the 30S and 50S subunits to form the 70S ribosome, for tRNA binding and peptide bond formation. It has been suggested to have peptidyltransferase activity; this is somewhat controversial. Makes several contacts with the 16S rRNA in the 70S ribosome. The protein is Large ribosomal subunit protein uL2 of Rhizobium etli (strain ATCC 51251 / DSM 11541 / JCM 21823 / NBRC 15573 / CFN 42).